The following is a 367-amino-acid chain: Anthranilate phosphoribosyltransferase (367 aa).

Over residues 1–17 the composition is skewed to low complexity; sequence MVLSSEASSAADHSAAA. Residues 1–22 are disordered; it reads MVLSSEASSAADHSAAAPIPTS. Residues Gly-104, 107-108, Thr-112, 114-117, 132-140, and Gly-144 contribute to the 5-phospho-alpha-D-ribose 1-diphosphate site; these read GD, NLST, and KHGNRAASS. Anthranilate is bound at residue Gly-104. Ser-116 lines the Mg(2+) pocket. Residue Asn-135 participates in anthranilate binding. Position 190 (Arg-190) interacts with anthranilate. Residues Asp-248 and Glu-249 each coordinate Mg(2+).

It belongs to the anthranilate phosphoribosyltransferase family. Homodimer. Requires Mg(2+) as cofactor.

It carries out the reaction N-(5-phospho-beta-D-ribosyl)anthranilate + diphosphate = 5-phospho-alpha-D-ribose 1-diphosphate + anthranilate. Its pathway is amino-acid biosynthesis; L-tryptophan biosynthesis; L-tryptophan from chorismate: step 2/5. Its function is as follows. Catalyzes the transfer of the phosphoribosyl group of 5-phosphorylribose-1-pyrophosphate (PRPP) to anthranilate to yield N-(5'-phosphoribosyl)-anthranilate (PRA). This chain is Anthranilate phosphoribosyltransferase, found in Mycobacterium ulcerans (strain Agy99).